A 376-amino-acid chain; its full sequence is UDP-N-acetylglucosamine 2-epimerase (376 aa).

Residues R10, K15, D95, E117, H213, Q271, F276, 290 to 292 (SGG), E296, and R313 each bind substrate.

This sequence belongs to the UDP-N-acetylglucosamine 2-epimerase family. In terms of assembly, homodimer.

It localises to the cytoplasm. The catalysed reaction is UDP-N-acetyl-alpha-D-glucosamine = UDP-N-acetyl-alpha-D-mannosamine. Its pathway is bacterial outer membrane biogenesis; enterobacterial common antigen biosynthesis. Allosterically activated by its substrate, UDP-GlcNAc. Functionally, catalyzes the reversible epimerization at C-2 of UDP-N-acetylglucosamine (UDP-GlcNAc) and thereby provides bacteria with UDP-N-acetylmannosamine (UDP-ManNAc), the activated donor of ManNAc residues. Also involved in bacteriophage N4 adsorption. This is UDP-N-acetylglucosamine 2-epimerase from Escherichia coli (strain K12).